The following is a 910-amino-acid chain: Protein translocase subunit SecA (910 aa).

ATP is bound by residues glutamine 87, 105–109 (GEGKT), and aspartate 512. 3 stretches are compositionally biased toward basic and acidic residues: residues 561–571 (RHESRRIDNQL), 841–853 (EEER…ELAR), and 880–890 (TFEREARKVGR). 2 disordered regions span residues 561-584 (RHES…AGSS) and 835-910 (EEVD…GKIN). Residues cysteine 894, cysteine 896, cysteine 905, and histidine 906 each contribute to the Zn(2+) site. A compositionally biased stretch (basic residues) spans 900–910 (KKYKQCHGKIN).

This sequence belongs to the SecA family. As to quaternary structure, monomer and homodimer. Part of the essential Sec protein translocation apparatus which comprises SecA, SecYEG and auxiliary proteins SecDF-YajC and YidC. Requires Zn(2+) as cofactor.

Its subcellular location is the cell inner membrane. The protein resides in the cytoplasm. The catalysed reaction is ATP + H2O + cellular proteinSide 1 = ADP + phosphate + cellular proteinSide 2.. Functionally, part of the Sec protein translocase complex. Interacts with the SecYEG preprotein conducting channel. Has a central role in coupling the hydrolysis of ATP to the transfer of proteins into and across the cell membrane, serving both as a receptor for the preprotein-SecB complex and as an ATP-driven molecular motor driving the stepwise translocation of polypeptide chains across the membrane. In Photobacterium profundum (strain SS9), this protein is Protein translocase subunit SecA.